Consider the following 867-residue polypeptide: DNA mismatch repair protein MutS (867 aa).

609–616 (GPNMSGKS) contributes to the ATP binding site.

It belongs to the DNA mismatch repair MutS family.

Functionally, this protein is involved in the repair of mismatches in DNA. It is possible that it carries out the mismatch recognition step. This protein has a weak ATPase activity. The chain is DNA mismatch repair protein MutS from Latilactobacillus sakei subsp. sakei (strain 23K) (Lactobacillus sakei subsp. sakei).